Reading from the N-terminus, the 373-residue chain is WAT1-related protein At4g08300 (373 aa).

The next 10 helical transmembrane spans lie at 11–31, 41–61, 67–87, 102–122, 139–159, 185–205, 219–239, 255–275, 281–301, and 306–326; these read PIIAIISLQFGYAGMYIITMV, ILATYRHVVATIVIAPFALIL, PKMTWPLFLRILALGFLEPLL, TYSSAFVNALPAITFIMAVIF, IGTAITVGGAMVMTLYKGPAI, WVTGTLAVMGSITTWAGFFIL, LVMWICAMGTVLNTIASLIMV, AAVYSGVVCSGMAYYIQSIVI, VFTTSFSPMCMIITAFLGVLV, and IHLGSIIGAIFIVFGLYSVVW. 2 EamA domains span residues 23–151 and 198–325; these read AGMY…AMVM and TWAG…YSVV.

The protein belongs to the drug/metabolite transporter (DMT) superfamily. Plant drug/metabolite exporter (P-DME) (TC 2.A.7.4) family.

It localises to the membrane. In Arabidopsis thaliana (Mouse-ear cress), this protein is WAT1-related protein At4g08300.